A 539-amino-acid polypeptide reads, in one-letter code: 4-hydroxybenzoate--CoA/benzoate--CoA ligase (539 aa).

It belongs to the ATP-dependent AMP-binding enzyme family. Benzoate-CoA ligase subfamily. As to quaternary structure, homodimer. The N-terminus is blocked.

The enzyme catalyses 4-hydroxybenzoate + ATP + CoA = 4-hydroxybenzoyl-CoA + AMP + diphosphate. It catalyses the reaction benzoate + ATP + CoA = benzoyl-CoA + AMP + diphosphate. Its function is as follows. Catalyzes the ligation of 4-hydroxybenzoate, benzoate or cyclohex-1,4-dienecarboxylate and CoA at the expense of ATP. The enzyme shows low activity towards cyclo-2,5-dienecarboxylate, 4-fluorobenzoate, 4-chlorobenzoate and 2-methoxybenzoate. The sequence is that of 4-hydroxybenzoate--CoA/benzoate--CoA ligase (hbaA) from Rhodopseudomonas palustris (strain ATCC BAA-98 / CGA009).